Consider the following 361-residue polypeptide: Queuine tRNA-ribosyltransferase (361 aa).

Aspartate 89 serves as the catalytic Proton acceptor. Substrate contacts are provided by residues 89–93, aspartate 143, glutamine 185, and glycine 212; that span reads DSGGF. An RNA binding region spans residues 243 to 249; it reads GVGTPED. Aspartate 262 (nucleophile) is an active-site residue. An RNA binding; important for wobble base 34 recognition region spans residues 267 to 271; that stretch reads TRNAR. Zn(2+)-binding residues include cysteine 300, cysteine 302, cysteine 305, and histidine 331.

It belongs to the queuine tRNA-ribosyltransferase family. Homodimer. Within each dimer, one monomer is responsible for RNA recognition and catalysis, while the other monomer binds to the replacement base PreQ1. It depends on Zn(2+) as a cofactor.

It carries out the reaction 7-aminomethyl-7-carbaguanine + guanosine(34) in tRNA = 7-aminomethyl-7-carbaguanosine(34) in tRNA + guanine. Its pathway is tRNA modification; tRNA-queuosine biosynthesis. Its function is as follows. Catalyzes the base-exchange of a guanine (G) residue with the queuine precursor 7-aminomethyl-7-deazaguanine (PreQ1) at position 34 (anticodon wobble position) in tRNAs with GU(N) anticodons (tRNA-Asp, -Asn, -His and -Tyr). Catalysis occurs through a double-displacement mechanism. The nucleophile active site attacks the C1' of nucleotide 34 to detach the guanine base from the RNA, forming a covalent enzyme-RNA intermediate. The proton acceptor active site deprotonates the incoming PreQ1, allowing a nucleophilic attack on the C1' of the ribose to form the product. After dissociation, two additional enzymatic reactions on the tRNA convert PreQ1 to queuine (Q), resulting in the hypermodified nucleoside queuosine (7-(((4,5-cis-dihydroxy-2-cyclopenten-1-yl)amino)methyl)-7-deazaguanosine). The protein is Queuine tRNA-ribosyltransferase of Nitrosomonas eutropha (strain DSM 101675 / C91 / Nm57).